The sequence spans 179 residues: Large ribosomal subunit protein uL5 (179 aa).

It belongs to the universal ribosomal protein uL5 family. Part of the 50S ribosomal subunit; part of the 5S rRNA/L5/L18/L25 subcomplex. Contacts the 5S rRNA and the P site tRNA. Forms a bridge to the 30S subunit in the 70S ribosome.

Its function is as follows. This is one of the proteins that bind and probably mediate the attachment of the 5S RNA into the large ribosomal subunit, where it forms part of the central protuberance. In the 70S ribosome it contacts protein S13 of the 30S subunit (bridge B1b), connecting the 2 subunits; this bridge is implicated in subunit movement. Contacts the P site tRNA; the 5S rRNA and some of its associated proteins might help stabilize positioning of ribosome-bound tRNAs. The protein is Large ribosomal subunit protein uL5 of Shewanella denitrificans (strain OS217 / ATCC BAA-1090 / DSM 15013).